A 194-amino-acid polypeptide reads, in one-letter code: MRLILLGPPGAGKGTQAQILVEKLHIPQLSTGDMLRAAVKAETEIGKKAKAVMDAGELVSDAIVNAIVAERIDQPDCANGFILDGYPRTLAQADAVEAMLGERGLKLDAVIELVVDDKALVGRIMKRAEDAQAAGQPVRRDDNPEVFEERLREYYKKTAPLVGYYYAKGLLKGVDGMASIDEVTRQIEGILAKA.

10–15 serves as a coordination point for ATP; that stretch reads GAGKGT. Residues 30–59 form an NMP region; it reads STGDMLRAAVKAETEIGKKAKAVMDAGELV. AMP-binding positions include threonine 31, arginine 36, 57–59, 85–88, and glutamine 92; these read ELV and GYPR. Residues 126 to 142 form an LID region; that stretch reads KRAEDAQAAGQPVRRDD. Arginine 127 contacts ATP. AMP contacts are provided by arginine 139 and arginine 150. ATP is bound at residue alanine 178.

This sequence belongs to the adenylate kinase family. Monomer.

It is found in the cytoplasm. It catalyses the reaction AMP + ATP = 2 ADP. Its pathway is purine metabolism; AMP biosynthesis via salvage pathway; AMP from ADP: step 1/1. Catalyzes the reversible transfer of the terminal phosphate group between ATP and AMP. Plays an important role in cellular energy homeostasis and in adenine nucleotide metabolism. The protein is Adenylate kinase of Chelativorans sp. (strain BNC1).